Here is a 285-residue protein sequence, read N- to C-terminus: 2-dehydro-3-deoxyphosphooctonate aldolase (285 aa).

The protein belongs to the KdsA family.

The protein localises to the cytoplasm. The enzyme catalyses D-arabinose 5-phosphate + phosphoenolpyruvate + H2O = 3-deoxy-alpha-D-manno-2-octulosonate-8-phosphate + phosphate. The protein operates within carbohydrate biosynthesis; 3-deoxy-D-manno-octulosonate biosynthesis; 3-deoxy-D-manno-octulosonate from D-ribulose 5-phosphate: step 2/3. Its pathway is bacterial outer membrane biogenesis; lipopolysaccharide biosynthesis. This chain is 2-dehydro-3-deoxyphosphooctonate aldolase, found in Methylibium petroleiphilum (strain ATCC BAA-1232 / LMG 22953 / PM1).